Here is a 146-residue protein sequence, read N- to C-terminus: Hemoglobin subunit delta (146 aa).

Residues 2-146 (HLTGDEKSAV…VATALAHKYH (145 aa)) enclose the Globin domain. Serine 50 bears the Phosphoserine mark. Histidine 63 and histidine 92 together coordinate heme b.

This sequence belongs to the globin family. In terms of assembly, heterotetramer of two delta chains and two alpha chains. Red blood cells.

The sequence is that of Hemoglobin subunit delta (HBD) from Saimiri sciureus (Common squirrel monkey).